The chain runs to 120 residues: UPF0102 protein PST_1070 (120 aa).

It belongs to the UPF0102 family.

The protein is UPF0102 protein PST_1070 of Stutzerimonas stutzeri (strain A1501) (Pseudomonas stutzeri).